Here is a 284-residue protein sequence, read N- to C-terminus: Shikimate dehydrogenase (NADP(+)) (284 aa).

Shikimate-binding positions include 19–21 (SFS) and threonine 66. Lysine 70 (proton acceptor) is an active-site residue. Aspartate 82 is a binding site for NADP(+). Shikimate contacts are provided by asparagine 91 and aspartate 106. NADP(+) contacts are provided by residues 130–134 (GSGGS) and isoleucine 226. Tyrosine 228 lines the shikimate pocket. Glycine 249 lines the NADP(+) pocket.

It belongs to the shikimate dehydrogenase family. Homodimer.

It catalyses the reaction shikimate + NADP(+) = 3-dehydroshikimate + NADPH + H(+). Its pathway is metabolic intermediate biosynthesis; chorismate biosynthesis; chorismate from D-erythrose 4-phosphate and phosphoenolpyruvate: step 4/7. In terms of biological role, involved in the biosynthesis of the chorismate, which leads to the biosynthesis of aromatic amino acids. Catalyzes the reversible NADPH linked reduction of 3-dehydroshikimate (DHSA) to yield shikimate (SA). The sequence is that of Shikimate dehydrogenase (NADP(+)) from Methanococcus vannielii (strain ATCC 35089 / DSM 1224 / JCM 13029 / OCM 148 / SB).